Here is a 572-residue protein sequence, read N- to C-terminus: Sialate:O-sulfotransferase 1 (572 aa).

Over 1–14 the chain is Cytoplasmic; it reads MAKPFFRLQKFLRR. The chain crosses the membrane as a helical; Signal-anchor for type II membrane protein span at residues 15 to 35; the sequence is TQFLLLFLTAAYLMTGSLLLL. Residues 36-572 lie on the Extracellular side of the membrane; that stretch reads QRARVALPQA…AGLPREYVPR (537 aa). Asn105 carries an N-linked (GlcNAc...) asparagine glycan. 2 WSC domains span residues 139–231 and 242–337; these read RGNY…YSVG and TATY…DTRC. Asn254 is a glycosylation site (N-linked (GlcNAc...) asparagine).

It belongs to the WSCD family.

The protein localises to the golgi apparatus membrane. It carries out the reaction a ganglioside GM1b + 3'-phosphoadenylyl sulfate = an 8-O-sulfo-ganglioside GM1b + adenosine 3',5'-bisphosphate + H(+). Its function is as follows. Sialate:O-sulfotransferase which catalyzes 8-O-sulfation at the Sia-glycan level using 3'-phosphoadenosine 5'-phosphosulfate (PAPS) as a donor, forming 8-O-sulfated Sia (Sia8S)-glycans. Displays selectivity toward glycolipids such as GM1 gangliosides. The protein is Sialate:O-sulfotransferase 1 (Wscd1) of Mus musculus (Mouse).